The sequence spans 354 residues: Homeobox protein Nkx-2.4 (354 aa).

The segment at residues 189–248 (RRKRRVLFSQAQVYELERRFKQQKYLSAPEREHLASMIHLTPTQVKIWFQNHRYKMKRQA) is a DNA-binding region (homeobox). The segment at 246–329 (RQAKDKAAQQ…PALHGPGGGL (84 aa)) is disordered. A compositionally biased stretch (pro residues) spans 263-272 (GPPPPPPPSP).

The protein belongs to the NK-2 homeobox family.

It is found in the nucleus. Its function is as follows. Probable transcription factor. This chain is Homeobox protein Nkx-2.4 (NKX2-4), found in Homo sapiens (Human).